We begin with the raw amino-acid sequence, 325 residues long: Release factor glutamine methyltransferase (325 aa).

S-adenosyl-L-methionine is bound by residues 141–145 (GTGSG), D164, W193, and N207. 207–210 (NPPY) is a substrate binding site. The interval 306 to 325 (LPPIHIDAKPSAPGNGPTKA) is disordered.

Belongs to the protein N5-glutamine methyltransferase family. PrmC subfamily.

It catalyses the reaction L-glutaminyl-[peptide chain release factor] + S-adenosyl-L-methionine = N(5)-methyl-L-glutaminyl-[peptide chain release factor] + S-adenosyl-L-homocysteine + H(+). Methylates the class 1 translation termination release factors RF1/PrfA and RF2/PrfB on the glutamine residue of the universally conserved GGQ motif. The chain is Release factor glutamine methyltransferase from Rhodospirillum rubrum (strain ATCC 11170 / ATH 1.1.1 / DSM 467 / LMG 4362 / NCIMB 8255 / S1).